We begin with the raw amino-acid sequence, 189 residues long: MGMMLLLLSMLAGLVAEAEGQAFHFGKCPNPPVQENFDLNKYLGRWYEIEKIPVSFEKGNCIQANYSLKENGRVKVLNQELRPDGTVNQIEGEATHSNITEPAKLGVKFFQLMPSAPYWVLATDYDNYALVYSCTNIIWLFHVDHIWILGRNRYLPQETVTYLKDILTSNNIDIEKMTLTDQANCPDFL.

The signal sequence occupies residues 1–20; sequence MGMMLLLLSMLAGLVAEAEG. Residue Gln-21 is modified to Pyrrolidone carboxylic acid. Intrachain disulfides connect Cys-28-Cys-134 and Cys-61-Cys-185. 2 N-linked (GlcNAc...) asparagine glycosylation sites follow: Asn-65 and Asn-98.

It belongs to the calycin superfamily. Lipocalin family. In terms of assembly, homodimer.

It localises to the secreted. In terms of biological role, APOD occurs in the macromolecular complex with lecithin-transport and binding of bilin. Appears to be able to transport a variety of ligands in a number of different contexts. This chain is Apolipoprotein D (APOD), found in Cavia porcellus (Guinea pig).